Consider the following 49-residue polypeptide: Large ribosomal subunit protein bL32 (49 aa).

Residues 25-49 (AKPVKDKDGTYKLPHHINPTTGEYK) form a disordered region.

This sequence belongs to the bacterial ribosomal protein bL32 family.

The polypeptide is Large ribosomal subunit protein bL32 (Sulfurimonas denitrificans (strain ATCC 33889 / DSM 1251) (Thiomicrospira denitrificans (strain ATCC 33889 / DSM 1251))).